Here is a 530-residue protein sequence, read N- to C-terminus: Cytochrome P450 monooxygenase ausG (530 aa).

Residues 31–51 form a helical membrane-spanning segment; it reads LLVAYRLPGLLLLFSITIILF. A heme-binding site is contributed by cysteine 470.

It belongs to the cytochrome P450 family. Heme is required as a cofactor.

It localises to the membrane. Its pathway is secondary metabolite biosynthesis; terpenoid biosynthesis. Cytochrome P450 monooxygenase; part of the gene cluster B that mediates the biosynthesis of the fungal meroterpenoid acetoxydehydroaustin. The first step of the pathway is the synthesis of 3,5-dimethylorsellinic acid by the polyketide synthase ausA. 3,5-dimethylorsellinic acid is then prenylated by the polyprenyl transferase ausN. Further epoxidation by the FAD-dependent monooxygenase ausM and cyclization by the probable terpene cyclase ausL lead to the formation of protoaustinoid A. Protoaustinoid A is then oxidized to spiro-lactone preaustinoid A3 by the combined action of the FAD-binding monooxygenases ausB and ausC, and the dioxygenase ausE. Acid-catalyzed keto-rearrangement and ring contraction of the tetraketide portion of preaustinoid A3 by ausJ lead to the formation of preaustinoid A4. The aldo-keto reductase ausK, with the help of ausH, is involved in the next step by transforming preaustinoid A4 into isoaustinone which is in turn hydroxylated by the P450 monooxygenase ausI to form austinolide. The cytochrome P450 monooxygenase ausG then modifies austinolide to austinol. Austinol is further acetylated to austin by the O-acetyltransferase ausP, which spontaneously changes to dehydroaustin. The cytochrome P450 monooxygenase then converts dehydroaustin is into 7-dehydrodehydroaustin. The hydroxylation catalyzed by ausR permits the second O-acetyltransferase ausQ to add an additional acetyl group to the molecule, leading to the formation of acetoxydehydroaustin. Due to genetic rearrangements of the clusters and the subsequent loss of some enzymes, the end product of the Penicillium brasilianum austinoid biosynthesis clusters is acetoxydehydroaustin. The polypeptide is Cytochrome P450 monooxygenase ausG (Penicillium brasilianum).